The sequence spans 568 residues: 4-hydroxy-7-methoxy-3-oxo-3,4-dihydro-2H-1,4-benzoxazin-2-yl glucoside beta-D-glucosidase, chloroplastic (568 aa).

The N-terminal 50 residues, 1-50 (MALLVGGTLNPTTHLSLRSRAGRNSENVWLRSAASSQTSKGRFCNLTVRA), are a transit peptide targeting the chloroplast. Residues glutamine 92, histidine 194, and 239-240 (NE) each bind a beta-D-glucoside. Glutamate 240 serves as the catalytic Proton donor. A disulfide bond links cysteine 259 and cysteine 265. A beta-D-glucoside is bound by residues tyrosine 383, glutamate 456, tryptophan 504, 511 to 512 (EW), and phenylalanine 520. Glutamate 456 (nucleophile) is an active-site residue.

It belongs to the glycosyl hydrolase 1 family. As to quaternary structure, homohexamer. Expressed in seedlings, mesocotyl, coleoptile, leaf sheath, and roots.

The protein localises to the plastid. It localises to the chloroplast. It catalyses the reaction DIMBOA beta-D-glucoside + H2O = DIMBOA + D-glucose. The enzyme catalyses DIBOA beta-D-glucoside + H2O = DIBOA + D-glucose. The catalysed reaction is Hydrolysis of terminal, non-reducing beta-D-glucosyl residues with release of beta-D-glucose.. Inhibited by castanospermine, Ag(+) and Cu(2+). 34% inhibition by Zn(2+) and not affected by EDTA. Functionally, involved in defense of young plant parts against pests via the production of benzoxazolinones (hydroxamic acids) from hydroxamic acid glucosides. The preferred substrate is DIBOA-beta-D-glucoside. Can also use esculin and genistein glucoside as substrates, but no activity with salicin, p-nitrophenyl-alpha-glucoside or substrates related to cell wall components. The polypeptide is 4-hydroxy-7-methoxy-3-oxo-3,4-dihydro-2H-1,4-benzoxazin-2-yl glucoside beta-D-glucosidase, chloroplastic (Secale cereale (Rye)).